A 538-amino-acid chain; its full sequence is Xylosidase/arabinosidase 43B (538 aa).

Glu-367 functions as the Proton donor in the catalytic mechanism.

The protein belongs to the glycosyl hydrolase 43 family.

The enzyme catalyses Hydrolysis of (1-&gt;4)-beta-D-xylans, to remove successive D-xylose residues from the non-reducing termini.. The catalysed reaction is Hydrolysis of terminal non-reducing alpha-L-arabinofuranoside residues in alpha-L-arabinosides.. Activity is inhibited by Ag(+), Li(+), Cu(2+), Cr(3+), Co(3+), Ni(2+), Mg(2+), Zn(2+), EDTA, SDS and beta-mercaptoethanol; but not by Mn(2+), Pb(2+), Ca(2+) and Fe(3+). In terms of biological role, bifunctional beta-xylosidase/alpha-L-arabinosidases with a low level of xylanase activity. Is most active on 4-nitrophenyl beta-D-xylopyranoside (pNPX) (defined as 100%), moderate on p-nitrophenyl-alpha-L-arabinofuranoside (pNPA) (56.6%), and weak on beechwood xylan (5.7%) and birchwood xylan (2.7%). Is able to attack xylooligosacchardies with degrees of polymerisation of 2-5, releasing the amounts of reducing sugars in the order of xylopentose &gt; xylotetraose &gt; xylotriose &gt; xylobiose, i.e. the rate of xylose released from xylooligosacchardies increased with the chain length. No activity was detected in the presence of carboxymethyl cellulose-sodium (CMC-Na), sugar beet arabinan, AZCL-arabinan (debranched), 4-nitrophenyl a-D - galactopyranoside, 2-nitrophenyl beta-D-galactopyranoside, and 4-nitrophenyl alpha-D-glucopyranoside. The protein is Xylosidase/arabinosidase 43B of Humicola insolens (Soft-rot fungus).